A 272-amino-acid polypeptide reads, in one-letter code: NADH-dependent L-xylulose reductase (272 aa).

Residues leucine 24 and aspartate 78 each coordinate NADP(+). The active-site Proton donor is serine 160. Residues tyrosine 175, lysine 179, and isoleucine 208 each contribute to the NADP(+) site. The active-site Proton acceptor is the tyrosine 175. Lysine 179 serves as the catalytic Lowers pKa of active site Tyr.

The protein belongs to the short-chain dehydrogenases/reductases (SDR) family.

It carries out the reaction xylitol + NAD(+) = L-xylulose + NADH + H(+). The catalysed reaction is D-arabinitol + NAD(+) = D-ribulose + NADH + H(+). Its function is as follows. NADH-dependent L-xylulose reductase; part of the yeast pathway for L-arabinose catabolism. Reversibly converts L-xylulose to xylitol and D-ribulose to D-arabinitol. It has a much lower activity with D-xylulose. Sugar alcohols can serve as a substrate when the hydroxyl group of C-2 is in the L- and the hydroxyl group of the C-3 is in the D-configuration. Also seems to be specific for sugar alcohols that have not more than 5 carbons since no activity is observed with dulcitol (galactitol), which has the hydroxyl group of C-2 in L- and of C-3 in D-configuration, but is a six-carbon sugar alcohol. The chain is NADH-dependent L-xylulose reductase from Ambrosiozyma monospora (Yeast).